A 204-amino-acid chain; its full sequence is Cytochrome c biogenesis ATP-binding export protein CcmA (204 aa).

Residues 3-204 form the ABC transporter domain; that stretch reads LSGHGLRCVR…ARELRIGGTT (202 aa). 35-42 is an ATP binding site; sequence GPNGAGKT.

It belongs to the ABC transporter superfamily. CcmA exporter (TC 3.A.1.107) family. In terms of assembly, the complex is composed of two ATP-binding proteins (CcmA) and two transmembrane proteins (CcmB).

The protein localises to the cell inner membrane. The catalysed reaction is heme b(in) + ATP + H2O = heme b(out) + ADP + phosphate + H(+). Functionally, part of the ABC transporter complex CcmAB involved in the biogenesis of c-type cytochromes; once thought to export heme, this seems not to be the case, but its exact role is uncertain. Responsible for energy coupling to the transport system. In Nitrobacter hamburgensis (strain DSM 10229 / NCIMB 13809 / X14), this protein is Cytochrome c biogenesis ATP-binding export protein CcmA.